The chain runs to 406 residues: Collagen and calcium-binding EGF domain-containing protein 1 (406 aa).

The N-terminal stretch at 1–34 is a signal peptide; the sequence is MVPPPPSRGGAARGQLGRSLGPLLLLLALGHTWT. An EGF-like; calcium-binding domain is found at 134–175; it reads DIDECASSNGTLCAHICINTLGSYRCECREGYIREDDGKTCT. 3 disulfides stabilise this stretch: Cys-138-Cys-150, Cys-146-Cys-159, and Cys-161-Cys-174. N-linked (GlcNAc...) asparagine glycosylation is present at Asn-142. Asn-182 carries an N-linked (GlcNAc...) asparagine glycan. Disordered regions lie at residues 244–335 and 360–406; these read YLPG…PGSF and RTHS…DFYP. Collagen-like domains follow at residues 245-290 and 300-333; these read LPGP…PMGP and GRRGPVGPPGAPGRDGSKGERGAPGPRGSPGPPG. Pro residues predominate over residues 270–279; it reads PGMPGPPGQP. Low complexity predominate over residues 281-292; that stretch reads PRGSMGPMGPSP. Residue Ser-385 is glycosylated (O-linked (Xyl...) (chondroitin sulfate) serine). Over residues 386–406 the composition is skewed to basic and acidic residues; that stretch reads GDDHPRRTETRDLRAPRDFYP.

The protein belongs to the CCBE1 family. As to expression, detected in fibroblasts and urine (at protein level). Not expressed in blood or lymphatic endothelial cells.

It is found in the secreted. Functionally, required for lymphangioblast budding and angiogenic sprouting from venous endothelium during embryogenesis. The chain is Collagen and calcium-binding EGF domain-containing protein 1 (CCBE1) from Homo sapiens (Human).